The sequence spans 387 residues: Formate-dependent phosphoribosylglycinamide formyltransferase (387 aa).

N(1)-(5-phospho-beta-D-ribosyl)glycinamide is bound by residues 15–16 (EL) and Glu-75. ATP is bound by residues Arg-106, Lys-147, 152-157 (SSGKGQ), 187-190 (EEFI), and Glu-195. The 191-residue stretch at 111–301 (DLASNELNIR…EFELHLRAVL (191 aa)) folds into the ATP-grasp domain. The Mg(2+) site is built by Glu-260 and Glu-272. Residues Asp-279, Lys-349, and 356 to 357 (RR) each bind N(1)-(5-phospho-beta-D-ribosyl)glycinamide.

It belongs to the PurK/PurT family. In terms of assembly, homodimer.

It carries out the reaction N(1)-(5-phospho-beta-D-ribosyl)glycinamide + formate + ATP = N(2)-formyl-N(1)-(5-phospho-beta-D-ribosyl)glycinamide + ADP + phosphate + H(+). It participates in purine metabolism; IMP biosynthesis via de novo pathway; N(2)-formyl-N(1)-(5-phospho-D-ribosyl)glycinamide from N(1)-(5-phospho-D-ribosyl)glycinamide (formate route): step 1/1. In terms of biological role, involved in the de novo purine biosynthesis. Catalyzes the transfer of formate to 5-phospho-ribosyl-glycinamide (GAR), producing 5-phospho-ribosyl-N-formylglycinamide (FGAR). Formate is provided by PurU via hydrolysis of 10-formyl-tetrahydrofolate. This chain is Formate-dependent phosphoribosylglycinamide formyltransferase, found in Prochlorococcus marinus (strain NATL2A).